Consider the following 406-residue polypeptide: Elongation factor Tu (406 aa).

The tr-type G domain maps to 10–215; sequence KPHVNVGTIG…AIDEYIPTPV (206 aa). The tract at residues 19 to 26 is G1; the sequence is GHVDHGKT. 19 to 26 provides a ligand contact to GTP; sequence GHVDHGKT. Threonine 26 provides a ligand contact to Mg(2+). Residues 61-65 are G2; that stretch reads GITIN. A G3 region spans residues 82-85; it reads DCPG. Residues 82–86 and 137–140 each bind GTP; these read DCPGH and NKVD. The tract at residues 137–140 is G4; the sequence is NKVD. The interval 175 to 177 is G5; that stretch reads SAL.

The protein belongs to the TRAFAC class translation factor GTPase superfamily. Classic translation factor GTPase family. EF-Tu/EF-1A subfamily. Monomer.

It localises to the cytoplasm. It catalyses the reaction GTP + H2O = GDP + phosphate + H(+). In terms of biological role, GTP hydrolase that promotes the GTP-dependent binding of aminoacyl-tRNA to the A-site of ribosomes during protein biosynthesis. This chain is Elongation factor Tu, found in Thermus aquaticus.